Here is a 448-residue protein sequence, read N- to C-terminus: Asparagine--tRNA ligase (448 aa).

It belongs to the class-II aminoacyl-tRNA synthetase family. In terms of assembly, homodimer.

The protein localises to the cytoplasm. The enzyme catalyses tRNA(Asn) + L-asparagine + ATP = L-asparaginyl-tRNA(Asn) + AMP + diphosphate + H(+). This chain is Asparagine--tRNA ligase, found in Streptococcus pyogenes serotype M4 (strain MGAS10750).